The sequence spans 7354 residues: Microtubule-actin cross-linking factor 1, isoforms 1/2/3/4 (7354 aa).

Positions 1 to 47 (MSSSDEETLSERSCRSERSCRSERSYRSERSGSLSPCPPGDTLPWNL) are disordered. Residues 1 to 295 (MSSSDEETLS…VITYVSSIYD (295 aa)) are actin-binding. S4 is modified (phosphoserine). A compositionally biased stretch (basic and acidic residues) spans 9–30 (LSERSCRSERSCRSERSYRSER). Phosphoserine is present on S35. T42 bears the Phosphothreonine mark. S57 bears the Phosphoserine mark. Calponin-homology (CH) domains follow at residues 78–181 (RVQK…LHFQ) and 194–298 (MSAK…DAFP). The stretch at 148 to 171 (QRQVKLVNIRNDDITDGNPKLTLG) is one LRR 1 repeat. The residue at position 280 (S280) is a Phosphoserine. LRR repeat units follow at residues 377–399 (LYKL…YHPN) and 441–464 (LNCE…LESG). Residues 868-925 (KSTLSVKAICDYRQIEITICKNDECVLEDNSQRTKWKVISPTGNEAMVPSVCFLIPPP) enclose the SH3 domain. The LRR 5 repeat unit spans residues 1050–1073 (ISELKNIRLLLEECEQRLLKQIQS). Phosphoserine is present on S1122. LRR repeat units follow at residues 1128-1154 (ATTL…VYLN), 1187-1210 (PADL…VKDK), and 1257-1282 (HRVI…DYRA). Phosphoserine is present on residues S1367 and S1376. 5 Plectin repeats span residues 1577–1619 (LVLL…QLLG), 1654–1696 (LKVL…ELQS), 1769–1809 (RLLE…CAIL), 1811–1848 (RQLQ…VILE), and 1855–1885 (GLLL…HKIL). 3 positions are modified to phosphoserine: S2051, S2077, and S2081. Composition is skewed to basic and acidic residues over residues 2120 to 2131 (KEEQAETLREEN) and 2145 to 2155 (SEGKDLSTEKS). The segment at 2120–2155 (KEEQAETLREENISGDPLLVECPEESEGKDLSTEKS) is disordered. 5 Plectin repeats span residues 2276–2316 (STLS…VKLM), 2352–2393 (NVLM…RILE), 2394–2425 (GQVI…DTAD), 2487–2528 (LLTK…LRKV), and 2671–2715 (LKVL…ASHQ). Disordered regions lie at residues 2806–2841 (AGIR…DSKV), 2951–2978 (EMGG…EVTI), and 3058–3099 (SQET…HISK). The segment covering 2812–2837 (NGEKAEKGRKISVEMEGQRQDEKASS) has biased composition (basic and acidic residues). Residues 2968 to 2978 (SEEESDQEVTI) are compositionally biased toward acidic residues. Phosphoserine occurs at positions 3082 and 3085. LRR repeat units lie at residues 3225 to 3244 (VGQR…LPTR), 3606 to 3630 (SGKS…IQSH), and 3657 to 3681 (LTAL…TRVA). Spectrin repeat units follow at residues 3845-3920 (ELQK…NFEE) and 3962-4070 (QYQQ…ALLQ). Residue S3889 is modified to Phosphoserine. The LRR 12 repeat unit spans residues 3898-3920 (KGDLRFVTISGQKVLETENNFEE). LRR repeat units follow at residues 4087–4112 (LQSI…VIQE) and 4223–4249 (IQEL…TLGS). The stretch at 4428-4536 (RMEEVQKEAS…TVARQKQLEE (109 aa)) is one Spectrin 3 repeat. Phosphoserine is present on residues S4458 and S4483. LRR repeat units follow at residues 4473-4496 (KAFL…LAGL), 4563-4583 (GVLG…QFML), and 4728-4751 (KKRL…RMNR). Residues 4759–4863 (TQQFQQMFDE…KTANRQSRLK (105 aa)) form a Spectrin 4 repeat. S4921 is modified (phosphoserine). 3 LRR repeats span residues 5010 to 5035 (NKNL…YLRN), 5131 to 5153 (NKIQ…MLEE), and 5240 to 5263 (KDQV…LIQS). 13 Spectrin repeats span residues 5195-5300 (EDFY…QLQE), 5307-5409 (KFQD…QLED), 5414-5506 (AKQF…ADIT), 5631-5735 (RSQQ…ARLE), 5742-5844 (NQFW…ALDE), 5961-6066 (LAEK…KLED), 6071-6175 (AVQY…HKLE), 6181-6284 (LGQF…QQLQ), 6289-6395 (QAQG…KLEE), 6400-6503 (ATEF…RSLD), 6508-6614 (RAKQ…KLEE), 6621-6722 (QFMD…RLEQ), and 6726-6830 (QAEE…QRLE). T5394 carries the phosphothreonine modification. 2 LRR repeats span residues 5654–5678 (MALG…AFSI) and 5763–5787 (AQLP…QLRE). Position 5988 is a phosphoserine (S5988). At K6166 the chain carries N6-acetyllysine. Residues 6452 to 6475 (RDQIIELDQTGNQLKFLSQKQDVV) form an LRR 23 repeat. The interval 6904–6937 (SVEPTHAPFMEKSRSGSRKSLNQPTPPPMPILSQ) is disordered. The residue at position 6923 (S6923) is a Phosphoserine. EF-hand domains are found at residues 7001–7036 (HKKS…SKFP) and 7037–7072 (TTKL…NKDA). Ca(2+) is bound by residues D7014, D7016, D7018, K7020, E7025, D7050, D7052, D7054, Y7056, and E7061. The 79-residue stretch at 7077–7155 (TDADKIEDEV…EFLVKNDPCR (79 aa)) folds into the GAR domain. Positions 7077–7354 (TDADKIEDEV…ASPRTPGPKR (278 aa)) are C-terminal tail. Residues 7171-7354 (PEGASQGMTP…ASPRTPGPKR (184 aa)) form a disordered region. A compositionally biased stretch (low complexity) spans 7191–7225 (SSRAASPTRSSSSASQSNHSCTSMPSSPATPASGT). Position 7220 is a phosphothreonine (T7220). Polar residues predominate over residues 7242-7261 (FHSSRTSLAGDTSNSSSPAS). S7245 and S7258 each carry phosphoserine. Positions 7276-7290 (SRPGSRAGSRAGSRA) are enriched in low complexity. The 4 X 4 AA tandem repeats of [GS]-S-R-[AR] stretch occupies residues 7279-7294 (GSRAGSRAGSRASSRR). Residues S7296 and S7299 each carry the phosphoserine modification. Residues 7305-7315 (ETQSACSDTSE) show a composition bias toward polar residues. The segment covering 7316–7327 (SSAAGGQGSSRR) has biased composition (low complexity).

Belongs to the plakin or cytolinker family. As to quaternary structure, interacts with AXIN1, LRP6 and GOLGA4. Found in a complex composed of MACF1, APC, AXIN1, CTNNB1 and GSK3B. Interacts with MAPRE1, CLASP1 and CLASP2. Interacts with CAMSAP3. In terms of processing, phosphorylated on serine residues in the C-terminal tail by GSK3B. Phosphorylation inhibits microtubule-binding and this plays a critical role in bulge stem cell migration and skin wound repair. Wnt-signaling can repress phosphorylation. As to expression, enriched in the hair follicle stem cells (at protein level). Isoform 1 and isoform 2 are ubiquitous expressed, with higher levels seen in lung, heart, thymus, spleen and brain.

The protein resides in the cytoplasm. It localises to the cytoskeleton. It is found in the golgi apparatus. The protein localises to the cell membrane. Its subcellular location is the cell projection. The protein resides in the ruffle membrane. Functionally, F-actin-binding protein which plays a role in cross-linking actin to other cytoskeletal proteins and also binds to microtubules. Plays an important role in ERBB2-dependent stabilization of microtubules at the cell cortex. Acts as a positive regulator of Wnt receptor signaling pathway and is involved in the translocation of AXIN1 and its associated complex (composed of APC, CTNNB1 and GSK3B) from the cytoplasm to the cell membrane. Has actin-regulated ATPase activity and is essential for controlling focal adhesions (FAs) assembly and dynamics. Interaction with CAMSAP3 at the minus ends of non-centrosomal microtubules tethers microtubules minus-ends to actin filaments, regulating focal adhesion size and cell migration. May play role in delivery of transport vesicles containing GPI-linked proteins from the trans-Golgi network through its interaction with GOLGA4. Plays a key role in wound healing and epidermal cell migration. Required for efficient upward migration of bulge cells in response to wounding and this function is primarily rooted in its ability to coordinate microtubule dynamics and polarize hair follicle stem cells. As a regulator of actin and microtubule arrangement and stabilization, it plays an essential role in neurite outgrowth, branching and spine formation during brain development. The protein is Microtubule-actin cross-linking factor 1, isoforms 1/2/3/4 of Mus musculus (Mouse).